The sequence spans 433 residues: Homogentisate 1,2-dioxygenase (433 aa).

The active-site Proton acceptor is His288. The Fe cation site is built by His331 and Glu337. Homogentisate contacts are provided by Tyr346 and His367. Residue His367 coordinates Fe cation.

Belongs to the homogentisate dioxygenase family. Hexamer; dimer of trimers. Fe cation serves as cofactor.

The catalysed reaction is homogentisate + O2 = 4-maleylacetoacetate + H(+). It functions in the pathway amino-acid degradation; L-phenylalanine degradation; acetoacetate and fumarate from L-phenylalanine: step 4/6. In terms of biological role, involved in the catabolism of homogentisate (2,5-dihydroxyphenylacetate or 2,5-OH-PhAc), a central intermediate in the degradation of phenylalanine and tyrosine. Catalyzes the oxidative ring cleavage of the aromatic ring of homogentisate to yield maleylacetoacetate. The sequence is that of Homogentisate 1,2-dioxygenase from Pseudomonas putida (strain GB-1).